A 382-amino-acid polypeptide reads, in one-letter code: GDP-mannose 4,6 dehydratase 2 (382 aa).

NADP(+)-binding positions include Gly-40–Asp-45, Asp-97–Met-98, Leu-119–Ser-123, and Tyr-134. The active site involves Thr-166. Catalysis depends on nucleophile residues Glu-168 and Tyr-190. NADP(+) contacts are provided by Lys-194, His-220, and Arg-225.

This sequence belongs to the NAD(P)-dependent epimerase/dehydratase family. GDP-mannose 4,6-dehydratase subfamily. NADP(+) serves as cofactor.

It catalyses the reaction GDP-alpha-D-mannose = GDP-4-dehydro-alpha-D-rhamnose + H2O. The protein operates within nucleotide-sugar biosynthesis; GDP-L-fucose biosynthesis via de novo pathway; GDP-L-fucose from GDP-alpha-D-mannose: step 1/2. Functionally, catalyzes the conversion of GDP-D-mannose to GDP-4-dehydro-6-deoxy-D-mannose. This is GDP-mannose 4,6 dehydratase 2 (gmd-2) from Caenorhabditis elegans.